Reading from the N-terminus, the 756-residue chain is Xylosyl- and glucuronyltransferase LARGE1 (756 aa).

Residues 1–10 are Cytoplasmic-facing; the sequence is MLGICRGRRK. A helical; Signal-anchor for type II membrane protein transmembrane segment spans residues 11–31; it reads FLAASLTLLCIPAITWIYLFA. Residues 32–756 are Lumenal-facing; sequence GSFEDGKPVS…LKYLTAENNS (725 aa). Disordered regions lie at residues 43-64 and 82-108; these read SPLESQAHSPRYTASSQRERES and QLSLAQGQSPAHHRGNHSKTYSMEEGT. The span at 44-58 shows a compositional bias: polar residues; it reads PLESQAHSPRYTASS. Residues 53–95 adopt a coiled-coil conformation; the sequence is RYTASSQRERESLEVRVREVEEENRALRRQLSLAQGQSPAHHR. N-linked (GlcNAc...) asparagine glycans are attached at residues N97, N122, and N148. The xylosyltransferase activity stretch occupies residues 138–413; that stretch reads IHVAIVCAGY…FLEYDGNLLR (276 aa). Residues D242 and D244 each contribute to the Mn(2+) site. A glycan (N-linked (GlcNAc...) asparagine) is linked at N272. Residues 414-756 form a glucuronyltransferase activity region; the sequence is RELFGCPSET…LKYLTAENNS (343 aa). Mn(2+) is bound by residues D563 and D565.

It in the C-terminal section; belongs to the glycosyltransferase 49 family. In the N-terminal section; belongs to the glycosyltransferase 8 family. As to quaternary structure, interacts with DAG1 (via the N-terminal domain of alpha-DAG1); the interaction increases binding of DAG1 to laminin. Interacts with B4GAT1. It depends on Mn(2+) as a cofactor. In terms of tissue distribution, ubiquitous. Highest expression in heart, diaphragm and brain, where it is especially found in cerebral cortex, hippocampus, and trigeminal ganglion.

The protein localises to the golgi apparatus membrane. The enzyme catalyses 3-O-[beta-D-GlcA-(1-&gt;3)-beta-D-Xyl-(1-&gt;4)-Rib-ol-P-Rib-ol-P-3-beta-D-GalNAc-(1-&gt;3)-beta-D-GlcNAc-(1-&gt;4)-(O-6-P-alpha-D-Man)]-Thr-[protein] + UDP-alpha-D-xylose = 3-O-[alpha-D-Xyl-(1-&gt;3)-beta-D-GlcA-(1-&gt;4)-beta-D-Xyl-(1-&gt;4)-Rib-ol-P-Rib-ol-P-3-beta-D-GalNAc-(1-&gt;3)-beta-D-GlcNAc-(1-&gt;4)-(O-6-P-alpha-D-Man)]-Thr-[protein] + UDP + H(+). It carries out the reaction 3-O-{(1-&gt;[3)-alpha-D-Xyl-(1-&gt;3)-beta-D-GlcA-(1-&gt;](n)-4)-beta-D-Xyl-(1-&gt;4)-Rib-ol-P-Rib-ol-P-3-beta-D-GalNAc-(1-&gt;3)-beta-D-GlcNAc-(1-&gt;4)-O-6-P-alpha-D-Man}-L-Thr-[protein] + UDP-alpha-D-glucuronate = 3-O-{beta-D-GlcA-(1-&gt;[3)-alpha-D-Xyl-(1-&gt;3)-beta-D-GlcA-(1-&gt;](n)-4)-beta-D-Xyl-(1-&gt;4)-Rib-ol-P-Rib-ol-P-3-beta-D-GalNAc-(1-&gt;3)-beta-D-GlcNAc-(1-&gt;4)-O-6-P-alpha-D-Man}-L-Thr-[protein] + UDP + H(+). It catalyses the reaction 3-O-{beta-D-GlcA-(1-&gt;[3)-alpha-D-Xyl-(1-&gt;3)-beta-D-GlcA-(1-&gt;](n)-4)-beta-D-Xyl-(1-&gt;4)-Rib-ol-P-Rib-ol-P-3-beta-D-GalNAc-(1-&gt;3)-beta-D-GlcNAc-(1-&gt;4)-O-6-P-alpha-D-Man}-L-Thr-[protein] + UDP-alpha-D-xylose = 3-O-{(1-&gt;[3)-alpha-D-Xyl-(1-&gt;3)-beta-D-GlcA-(1-&gt;](n+1)-4)-beta-D-Xyl-(1-&gt;4)-Rib-ol-P-Rib-ol-P-3-beta-D-GalNAc-(1-&gt;3)-beta-D-GlcNAc-(1-&gt;4)-O-6-P-alpha-D-Man}-L-Thr-[protein] + UDP + H(+). Its pathway is protein modification; protein glycosylation. In terms of biological role, bifunctional glycosyltransferase with both alpha-1,3-xylosyltransferase and beta-1,3-glucuronyltransferase activities involved in the maturation of alpha-dystroglycan (DAG1) by glycosylation leading to DAG1 binding to laminin G-like domain-containing extracellular proteins with high affinity. Elongates the glucuronyl-beta-1,4-xylose-beta disaccharide primer structure initiated by B4GAT1 by adding repeating units [-3-Xylose-alpha-1,3-GlcA-beta-1-] to produce a heteropolysaccharide. Requires the phosphorylation of core M3 (O-mannosyl trisaccharide) by POMK to elongate the glucuronyl-beta-1,4-xylose-beta disaccharide primer. Plays a key role in skeletal muscle function and regeneration. The protein is Xylosyl- and glucuronyltransferase LARGE1 of Mus musculus (Mouse).